The sequence spans 195 residues: Interferon tau-8 (195 aa).

A signal peptide spans 1 to 23; that stretch reads MAFVLSLLMALVLVSYGPGGSLG. 2 cysteine pairs are disulfide-bonded: Cys24–Cys122 and Cys52–Cys162.

Belongs to the alpha/beta interferon family. IFN-alphaII subfamily. In terms of tissue distribution, constitutively and exclusively expressed in the mononuclear cells of the extraembryonic trophectoderm.

The protein localises to the secreted. Functionally, paracrine hormone primarily responsible for maternal recognition of pregnancy. Interacts with endometrial receptors, probably type I interferon receptors, and blocks estrogen receptor expression, preventing the estrogen-induced increase in oxytocin receptor expression in the endometrium. This results in the suppression of the pulsatile endometrial release of the luteolytic hormone prostaglandin F2-alpha, hindering the regression of the corpus luteum (luteolysis) and therefore a return to ovarian cyclicity. This, and a possible direct effect of IFN-tau on prostaglandin synthesis, leads in turn to continued ovarian progesterone secretion, which stimulates the secretion by the endometrium of the nutrients required for the growth of the conceptus. In summary, displays particularly high antiviral and antiproliferative potency concurrently with particular weak cytotoxicity, high antiluteolytic activity and immunomodulatory properties. In contrast with other IFNs, IFN-tau is not virally inducible. This is Interferon tau-8 (IFNT8) from Ovis aries (Sheep).